The sequence spans 3066 residues: MATIMIGSMAISVPNTHVSCASNSVMPVQAVQMAKQVPSARGVLYTLKREGSTQVHKHEEALRKFQEAFDQDVGIQRRLLVNKHSSIQSTKKNGLTLRRLTLEQARAKEAAIARRKQEEEDFLNGKYEQQFYAGVSATKSMKFEGGSVGFRTKYWRPTPKKTKERRATSQCRKPTYVLEEVLSIASKSGKLVEFITGKGKRVKVCYVRKHGAILPKFSLPHEEGKYIHQELQYASTYEFLPYICMFAKYKSINADDITYGDSGLLFDERSSLTTNHTKLPYFVVRGRRNGKLVNALEVVENMEDIQHYSQNPEAQFFRGWKKVFDKMPPHVENHECTTDFTNEQCGELAAAISQSIFPVKKLSCKQCRQHIKHLSWEEYKQFLLAHMGCHGPEWETFQEIDGMRYVKRVIETSTAENASLQTSLEIVRLTQNYKSTHMLQIQDINKALMKGPSVTQSELEQASKQLLAMTQWWKNHMTLTDEDALKVFRNKRSSKALLNPSLLCDNQLDKNGNFVWGERGRHSKRFFANYFEEVVPSEGYSKYVIRKNPNGQRELAIGSLIVPLDFERARMALQGKSVTREPITMSCISRQDGNFVYPCCCVTHDDGKAFYSELRSPTKRHLVIGTSGDPKYIDLPATDADRMYIAKEGFCYLNIFLAMLVNVNEDEAKDFTKMVRDVIVPRLGKWPTMLDVATAAYMLTVFHPETRNAELPRILVDHACQTMHVIDSFGSLTVGYHVLKAGTVNQLIQFASNDLQSEMKFYRVGGEVQQRMKCETALITSIFKPKRMIQILENDPYILLMGLVSPSILIHMYRMKHFEKGVELWISKEHSVAKIFIILEQLTKRVAANDVLLEQLEMISETSERFMSILEDCPQAPHSYKTAKDLLTMYIERKASNNQLVENGFVDMNDKLYMAYEKIYSDRLKQEWRALSWLEKFSITWQLKRFAPHTEKCLTKKVVEESSASSGNFASVCFMNAQSHLRNVRNTLFQKCDQVWTASVRAFVKLIISTLHRCYSDIVYLVNICIIFSLLVQMTSVLQGIVNTVRRDKALLSGWKRKEDEEAVIHLYEMCEKMEGGHPSIEKFLDHVKGVRPDLLPVAVSMTGQSEDVSAQAKTATQLQLEKIVAFMALLTMCIDNERSDAVFKVLSKLKAFFSTMGEDVKVQSLDEIQSIDEDKKLTIDFDLETNKESSSVSFDVKFEAWWNRQLEQNRVIPHYRSTGEFLEFTRETAAKIANLVATSSHTEFLIRGAVGSGKSTGLPHHLSKKGKVLLLEPTRPLAENVSKQLSFEPFYHNVTLRMRGMSKFGSSNIVVMTSGFAFHYYVNNPQQLSDFDFIIIDECHVQDSPTIAFNCALKEFEFSGKLIKVSATPPGRECEFTTQHPVKLKVEDHLSFQNFVQAQGTGSNADMIQHGNNLLVYVASYNEVDQLSRLLTEKHYKVTKVDGRTMQMGNVEIATTGTEGKPHFIVATNIIENGVTLDIDCVIDFGLKVVATLDTDNRCVRYNKQSVSYGERIQRLGRVGRCKPGFALRIGHTGKGVEEVPEFIATEAAFLSFAYGLPVTTQSVSTNILSRCTVKQARVALNFELTPFFTTNFIKYDGSMHPEIHRLLKSYKLRESEMLLTKIAIPYQFVGQWVTVKEYERQGIHLNCPEKVKIPFYVHGIPDKLYEMLWDTVCKYKNDAGFGSVKSVNATKISYTLSTDPTAIPRTLAILDHLLSEEMTKKSHFDTIGSAVTGYSFSLAGIADGFRKRYLKDYTQHNIAVLQQAKAQLLEFDCNKVDINNLHNVEGIGILNAVQLQSKHEVSKFLQLKGKWDGKKFMNDAVVAIFTLVGGGWMLWDYFTRVIREPVSTQGKKRQIQKLKFRDAFDRKIGREVYADDYTMEHTFGEAYTKKGKQKGSTRTKGMGRKSRNFIHLYGVEPENYSMIRFVDPLTGHTMDEHPRVDIRMVQQEFEEIRKDMIGEGELDRQRVYHNPGLQAYFIGKNTEEALKVDLTPHRPTLLCQNSNAIAGFPEREDELRQTGLPQVVSKSDVPRAKERVEMESKSVYKGLRDYSGISTLICQLTNSSDGHKETMFGVGYGSFIITNGHLFRRNNGMLTVKTWHGEFVIHNTTQLKIHFIQGKDVILIRMPKDFPPFGKRNLFRQPKREERVCMVGTNFQEKSLRATVSESSMILPEGKGSFWIHWITTQDGFCGLPLVSVNDGHIVGIHGLTSNDSEKNFFVPLTDGFEKEYLENADNLSWDKHWFWEPSKIAWGSLNLVEEQPKEEFKISKLVSDLFGNTVTVQGRKERWVLDAMEGNLAACGQADSALVTKHVVKGKCPYFAQYLSVNQEAKSFFEPLMGAYQPSRLNKDAFKRDFFKYNKPVVLNEVDFQSFERAVAGVKLMMMEFDFKECVYVTDPDEIYDSLNMKAAVGAQYKGKKQDYFSGMDSFDKERLLYLSCERLFYGEKGVWNGSLKAELRPIEKVQANKTRTFTAAPIDTLLGAKVCVDDFNNQFYSLNLTCPWTVGMTKFYRGWDKLMRSLPDGWVYCHADGSQFDSSLTPLLLNAVLDVRSFFMEDWWVGREMLENLYAEIVYTPILAPDGTIFKKFRGNNSGQPSTVVDNTLMVVIAMYYSCCKQGWSEEDIQERLVFFANGDDIILAVSDKDTWLYDTLSTSFAELGLNYNFEERTKKREELWFMSHKAVLVDGIYIPKLEPERIVSILEWDRSKELMHRTEAICASMIEAWGYTELLQEIRKFYLWLLNKDEFKELASSGKAPYIAETALRKLYTDVNAQTSELQRYLEVLDFNHADDCCESVSLQSGKEKEGDMDADKDPKKSTSSSKGAGTSSKDVNVGSKGKVVPRLQKITRKMNLPMVEGKIILSLDHLLEYKPNQVDLFNTRATRTQFEAWYNAVKDEYELDDEQMGVVMNGFMVWCIDNGTSPDANGVWVMMDGEEQIEYPLKPIVENAKPTLRQIMHHFSDAAEAYIEMRNSESPYMPRYGLLRNLRDRELARYAFDFYEVTSKTPNRAREAIAQMKAAALSGVNNKLFGLDGNISTNSENTERHTARDVNQNMHTLLGMGPPQ.

A Peptidase S30 domain is found at 168–308; the sequence is TSQCRKPTYV…VENMEDIQHY (141 aa). Catalysis depends on for P1 proteinase activity residues His221, Glu230, and Ser262. The short motif at 361 to 364 is the Involved in interaction with stylet and aphid transmission element; sequence KLSC. An Involved in virions binding and aphid transmission motif is present at residues 617-619; sequence PTK. One can recognise a Peptidase C6 domain in the interval 643 to 765; that stretch reads MYIAKEGFCY…QSEMKFYRVG (123 aa). Residues Cys651 and His724 each act as for helper component proteinase activity in the active site. In terms of domain architecture, Helicase ATP-binding spans 1236 to 1388; sequence LVATSSHTEF…TQHPVKLKVE (153 aa). 1249 to 1256 is an ATP binding site; it reads GAVGSGKS. Residues 1338-1341 carry the DECH box motif; the sequence is DECH. One can recognise a Helicase C-terminal domain in the interval 1407–1566; the sequence is DMIQHGNNLL…GLPVTTQSVS (160 aa). The Nuclear localization signal motif lies at 1891–1900; sequence KKGKQKGSTR. Position 1915 is an O-(5'-phospho-RNA)-tyrosine (Tyr1915). Positions 2042–2260 constitute a Peptidase C4 domain; the sequence is SKSVYKGLRD…IAWGSLNLVE (219 aa). Residues His2087, Asp2122, and Cys2192 each act as for nuclear inclusion protein A activity in the active site. A RdRp catalytic domain is found at 2526–2650; it reads WVYCHADGSQ…AVSDKDTWLY (125 aa). A disordered region spans residues 2799-2836; the sequence is SLQSGKEKEGDMDADKDPKKSTSSSKGAGTSSKDVNVG. Positions 2803–2818 are enriched in basic and acidic residues; that stretch reads GKEKEGDMDADKDPKK. Residues 2819 to 2831 show a composition bias toward low complexity; the sequence is STSSSKGAGTSSK. Thr3048 is subject to Phosphothreonine.

It belongs to the potyviridae genome polyprotein family. As to quaternary structure, interacts with host eIF4E protein (via cap-binding region); this interaction mediates the translation of the VPg-viral RNA conjugates. Part of a complex that comprises VPg, RNA, host EIF4E and EIF4G; this interaction mediates the translation of the VPg-viral RNA conjugates. Interacts with host eIF4E proteins in the host cytoplasm. Post-translationally, VPg is uridylylated by the polymerase and is covalently attached to the 5'-end of the genomic RNA. This uridylylated form acts as a nucleotide-peptide primer for the polymerase. In terms of processing, potyviral RNA is expressed as two polyproteins which undergo post-translational proteolytic processing. Genome polyprotein is processed by NIa-pro, P1 and HC-pro proteinases resulting in the production of at least ten individual proteins. P3N-PIPO polyprotein is cleaved by P1 and HC-pro proteinases resulting in the production of three individual proteins. The P1 proteinase and the HC-pro cleave only their respective C-termini autocatalytically. 6K1 is essential for proper proteolytic separation of P3 from CI.

It is found in the host cytoplasmic vesicle. Its subcellular location is the host cytoplasm. It localises to the host nucleus. The protein localises to the virion. The enzyme catalyses RNA(n) + a ribonucleoside 5'-triphosphate = RNA(n+1) + diphosphate. It carries out the reaction Hydrolyzes glutaminyl bonds, and activity is further restricted by preferences for the amino acids in P6 - P1' that vary with the species of potyvirus, e.g. Glu-Xaa-Xaa-Tyr-Xaa-Gln-|-(Ser or Gly) for the enzyme from tobacco etch virus. The natural substrate is the viral polyprotein, but other proteins and oligopeptides containing the appropriate consensus sequence are also cleaved.. The catalysed reaction is Hydrolyzes a Gly-|-Gly bond at its own C-terminus, commonly in the sequence -Tyr-Xaa-Val-Gly-|-Gly, in the processing of the potyviral polyprotein.. Required for aphid transmission and also has proteolytic activity. Only cleaves a Gly-Gly dipeptide at its own C-terminus. Interacts with virions and aphid stylets. Acts as a suppressor of RNA-mediated gene silencing, also known as post-transcriptional gene silencing (PTGS), a mechanism of plant viral defense that limits the accumulation of viral RNAs. May have RNA-binding activity. Functionally, has helicase activity. It may be involved in replication. Its function is as follows. Indispensable for virus replication. Reduces the abundance of host transcripts related to jasmonic acid biosynthesis therefore altering the host defenses. In order to increase its own stability, decreases host protein degradation pathways. In terms of biological role, indispensable for virus replication. Mediates the cap-independent, EIF4E-dependent translation of viral genomic RNAs. Binds to the cap-binding site of host EIF4E and thus interferes with the host EIF4E-dependent mRNA export and translation. VPg-RNA directly binds EIF4E and is a template for transcription. Also forms trimeric complexes with EIF4E-EIF4G, which are templates for translation. Functionally, has RNA-binding and proteolytic activities. Its function is as follows. An RNA-dependent RNA polymerase that plays an essential role in the virus replication. In terms of biological role, involved in aphid transmission, cell-to-cell and systemis movement, encapsidation of the viral RNA and in the regulation of viral RNA amplification. The protein is Genome polyprotein of Glycine max (Soybean).